The sequence spans 52 residues: Large ribosomal subunit protein bL32c (52 aa).

The protein belongs to the bacterial ribosomal protein bL32 family.

It localises to the plastid. It is found in the chloroplast. The protein is Large ribosomal subunit protein bL32c of Olimarabidopsis pumila (Dwarf rocket).